The primary structure comprises 315 residues: Olfactory receptor 2V1 (315 aa).

The Extracellular segment spans residues 1–31 (MGRWVNQSYTDGFFLLGIFSHSQTDLVLFSA). Asparagine 6 is a glycosylation site (N-linked (GlcNAc...) asparagine). A helical transmembrane segment spans residues 32–52 (VMVVFTVALCGNVLLIFLIYL). The Cytoplasmic portion of the chain corresponds to 53–58 (DAGLHT). Residues 59–79 (PMYFFLSQLSLMDLMLVCNIV) form a helical membrane-spanning segment. Residues 80–99 (PKMAANFLSGRKSISFVGCG) are Extracellular-facing. A disulfide bridge links cysteine 98 with cysteine 180. Residues 100-120 (IQIGFFVSLVGSEGLLLGLMA) form a helical membrane-spanning segment. The Cytoplasmic portion of the chain corresponds to 121–149 (YDRYVAVSHPLHYPILMNQRVCLQITGSS). Residues 150 to 170 (WAFGIIDGVIQMVAAMGLPYC) form a helical membrane-spanning segment. Residues 171-198 (GSRSVDHFFCEVQALLKLACADTSLFDT) lie on the Extracellular side of the membrane. Residues 199 to 219 (LLFACCVFMLLLPFSIIMASY) traverse the membrane as a helical segment. The Cytoplasmic portion of the chain corresponds to 220–238 (ACILGAVLRIRSAQAWKKA). The chain crosses the membrane as a helical span at residues 239–259 (LATCSSHLTAVTLFYGAAMFM). Over 260–272 (YLRPRRYRAPSHD) the chain is Extracellular. Residues 273-293 (KVASIFYTVLTPMLNPLIYSL) traverse the membrane as a helical segment. At 294–315 (RNGEVMGALRKGLDRCRIGSQH) the chain is on the cytoplasmic side.

The protein belongs to the G-protein coupled receptor 1 family.

Its subcellular location is the cell membrane. Functionally, odorant receptor. The protein is Olfactory receptor 2V1 (OR2V1) of Homo sapiens (Human).